We begin with the raw amino-acid sequence, 722 residues long: Lysophospholipid acyltransferase 6 (722 aa).

The next 5 membrane-spanning stretches (helical) occupy residues 25-45, 62-84, 104-123, 180-200, and 243-263; these read MVGLSVDLVNFLICQISALFL, LRHTFALSIGLAFGYFCFGQQAI, IVQRAVLLVAMSYLLCVHLM, ALEYFSYVWHFQSILAGPLVF, and KVVGSLVCAFIFMKFVKIYPV. Active-site residues include asparagine 349 and histidine 381. The next 3 helical transmembrane spans lie at 378 to 398, 424 to 444, and 452 to 472; these read AVWHGFYPGYYLTFATGAVVV, ILTCLITRVVLGYATFPFVLL, and LYLRFYLCLHIISLVTIFILP. 2 stretches are compositionally biased toward polar residues: residues 485–511 and 549–570; these read NGNGNVRLSGSGNTKDAVTTSVESTAA and VEQPTEQPNNVNLRSRPQQQQP. Disordered regions lie at residues 485–582 and 650–687; these read NGNG…PTCA and NGAISLDSSNGGGLRKRNISSVHDNGTDPGHATADLHP.

It belongs to the membrane-bound acyltransferase family.

The protein localises to the endoplasmic reticulum. It localises to the membrane. The catalysed reaction is a 1-acyl-sn-glycero-3-phospho-L-serine + an acyl-CoA = a 1,2-diacyl-sn-glycero-3-phospho-L-serine + CoA. It catalyses the reaction 1-(9Z-octadecenoyl)-sn-glycero-3-phospho-L-serine + (9Z)-hexadecenoyl-CoA = 1-(9Z-octadecenoyl)-2-(9Z-hexadecenoyl)-sn-glycero-3-phospho-L-serine + CoA. The enzyme catalyses 1-(9Z-octadecenoyl)-sn-glycero-3-phospho-L-serine + (9Z)-octadecenoyl-CoA = 1,2-di-(9Z)-octadecenoyl-sn-glycero-3-phospho-L-serine + CoA. It carries out the reaction a 1-acyl-sn-glycero-3-phosphocholine + an acyl-CoA = a 1,2-diacyl-sn-glycero-3-phosphocholine + CoA. The catalysed reaction is 1-hexadecanoyl-sn-glycero-3-phosphocholine + (9Z)-octadecenoyl-CoA = 1-hexadecanoyl-2-(9Z-octadecenoyl)-sn-glycero-3-phosphocholine + CoA. It catalyses the reaction (9Z)-hexadecenoyl-CoA + 1-hexadecanoyl-sn-glycero-3-phosphocholine = 1-hexadecanoyl-2-(9Z-hexadecenoyl)-sn-glycero-3-phosphocholine + CoA. The enzyme catalyses a 1-acyl-sn-glycero-3-phosphoethanolamine + an acyl-CoA = a 1,2-diacyl-sn-glycero-3-phosphoethanolamine + CoA. It carries out the reaction 1-hexadecanoyl-sn-glycero-3-phosphoethanolamine + (9Z)-octadecenoyl-CoA = 1-hexadecanoyl-2-(9Z-octadecenoyl)-sn-glycero-3-phosphoethanolamine + CoA. The catalysed reaction is 1-hexadecanoyl-sn-glycero-3-phosphoethanolamine + (9Z,12Z)-octadecadienoyl-CoA = 1-hexadecanoyl-2-(9Z,12Z-octadecadienoyl)-sn-glycero-3-phosphoethanolamine + CoA. It catalyses the reaction 1-hexadecanoyl-sn-glycero-3-phosphoethanolamine + (9Z)-hexadecenoyl-CoA = 1-hexadecanoyl-2-(9Z)-hexadecenoyl-sn-glycero-3-phosphoethanolamine + CoA. The enzyme catalyses 1-(9Z-octadecenoyl)-sn-glycero-3-phospho-(1'-sn-glycerol) + (9Z)-octadecenoyl-CoA = 1,2-di-(9Z-octadecenoyl)-sn-glycero-3-phospho-(1'-sn-glycerol) + CoA. It functions in the pathway lipid metabolism; phospholipid metabolism. Its function is as follows. Acyltransferase with broad-specificity, that mediates the acylation of lysophospholipids to produce phospholipids (glycerophospholipids). Converts lysophosphatidylserine (1-acyl-2-hydroxy-sn-glycero-3-phospho-L-serine or LPS) to phosphatidylserine (1,2-diacyl-sn-glycero-3-phospho-L-serine or PS) (LPSAT activity), lysophosphatidylcholine (1-acyl-sn-glycero-3-phosphocholine or LPC) to phosphatidylcholine (1,2-diacyl-sn-glycero-3-phosphocholine or PC) (LPCAT activity), also lysophosphatidylethanolamine (1-acyl-sn-glycero-3-phosphochethanolamine or LPE) to phosphatidylchethanolamine (LPEAT activity) and lysophosphatidylglycerol (1-acyl-2-hydroxy-sn-glycero-3-phospho-(1'-sn-glycerol) or LPG) to phosphatidylglycerol (1,2-diacyl-sn-glycero-3-phospho-(1'-sn-glycerol) or PG) (LPGAT activity). Has a preference for unsaturated fatty acids of at least 16 carbons such as oleoyl-CoA ((9Z)-octadecenoyl-CoA) and palmitoleoyl-CoA ((9Z)-hexadecenoyl-CoA). Glycerophospholipids are important structural and functional components of cellular membrane, acyl-chain remodeling regulates the molecular species distribution of glycerophospholipids which can affect membrane fluidity and curvature. Essential for fertility and viability together with Nessy protein (Nes). The protein is Lysophospholipid acyltransferase 6 of Drosophila melanogaster (Fruit fly).